The following is an 86-amino-acid chain: Serine protease inhibitor Kazal-type 9 (86 aa).

An N-terminal signal peptide occupies residues 1 to 19; the sequence is MRATAIVLLLALTLATMFS. Residues 26–86 enclose the Kazal-like domain; the sequence is TKQMVDCSHY…TLKFVHFGKC (61 aa). 3 cysteine pairs are disulfide-bonded: cysteine 32-cysteine 68, cysteine 46-cysteine 65, and cysteine 54-cysteine 86.

As to quaternary structure, dimer. Interacts with KLK5 and KLK8. In terms of tissue distribution, skin. Highly expressed at sites of hyperkeratosis. Also detected in thymus, tonsils, testis, pancreas, liver, placenta and brain. Expressed at stratum granulosum and stratum corneum at palmar and plantar sites (at protein level).

The protein resides in the secreted. Its function is as follows. Serine protease inhibitor which specifically inhibits KLK5. May contribute to the regulation of the desquamation process in skin by inhibiting KLK5. The protein is Serine protease inhibitor Kazal-type 9 (SPINK9) of Homo sapiens (Human).